A 171-amino-acid polypeptide reads, in one-letter code: S-ribosylhomocysteine lyase (171 aa).

The Fe cation site is built by His54, His58, and Cys128.

The protein belongs to the LuxS family. In terms of assembly, homodimer. Fe cation serves as cofactor.

The catalysed reaction is S-(5-deoxy-D-ribos-5-yl)-L-homocysteine = (S)-4,5-dihydroxypentane-2,3-dione + L-homocysteine. Its function is as follows. Involved in the synthesis of autoinducer 2 (AI-2) which is secreted by bacteria and is used to communicate both the cell density and the metabolic potential of the environment. The regulation of gene expression in response to changes in cell density is called quorum sensing. Catalyzes the transformation of S-ribosylhomocysteine (RHC) to homocysteine (HC) and 4,5-dihydroxy-2,3-pentadione (DPD). The sequence is that of S-ribosylhomocysteine lyase from Escherichia fergusonii (strain ATCC 35469 / DSM 13698 / CCUG 18766 / IAM 14443 / JCM 21226 / LMG 7866 / NBRC 102419 / NCTC 12128 / CDC 0568-73).